The following is a 505-amino-acid chain: Trans-cinnamate 4-monooxygenase (505 aa).

Residues 3–23 (LLLVEKTLLALFAAIIASIFI) traverse the membrane as a helical segment. (E)-cinnamate-binding positions include 213-218 (RSRLAQ) and A306. C447 contacts heme.

The protein belongs to the cytochrome P450 family. It depends on heme as a cofactor.

It localises to the membrane. It catalyses the reaction (E)-cinnamate + reduced [NADPH--hemoprotein reductase] + O2 = (E)-4-coumarate + oxidized [NADPH--hemoprotein reductase] + H2O + H(+). It participates in phenylpropanoid metabolism; trans-4-coumarate biosynthesis; trans-4-coumarate from trans-cinnamate: step 1/1. In terms of biological role, catalyzes the first oxidative step of the phenylpropanoid pathway in higher plants by transforming trans-cinnamate into p-coumarate. The compounds formed by this pathway are essential components for lignification, pollination, and defense against ultraviolet light, predators and pathogens. This is Trans-cinnamate 4-monooxygenase (CYP73A12) from Zinnia elegans (Garden zinnia).